Consider the following 372-residue polypeptide: Heterogeneous nuclear rnp K-like protein 2 (372 aa).

A compositionally biased stretch (polar residues) spans 1 to 23 (MSDINDPNSISLPVGSSCTSRGA). The interval 1–49 (MSDINDPNSISLPVGSSCTSRGASTETFTTSRSTTLFSSQQESKDEGNV) is disordered. A compositionally biased stretch (low complexity) spans 24-39 (STETFTTSRSTTLFSS). KH domains are found at residues 59 to 123 (TINH…LGQI), 167 to 232 (IGTS…LLQI), and 283 to 354 (EFKA…ESML).

It belongs to the HEK2 family. As to quaternary structure, binds RNA.

It localises to the cytoplasm. It is found in the P-body. Its subcellular location is the nucleus. The protein resides in the chromosome. The protein localises to the telomere. Its function is as follows. RNA-binding protein involved in the correct localization of transcripts in the cell. RNA localization is a widespread mechanism for achieving localized protein synthesis. Involved in structural and functional organization of telomeric chromatin and regulates silencing at the HMR locus. The chain is Heterogeneous nuclear rnp K-like protein 2 (HEK2) from Zygosaccharomyces rouxii (strain ATCC 2623 / CBS 732 / NBRC 1130 / NCYC 568 / NRRL Y-229).